Reading from the N-terminus, the 209-residue chain is Glycine cleavage system H-like protein gcvH4 (209 aa).

Over residues 35-51 the composition is skewed to low complexity; the sequence is NNNNNNNNNNNNNNNNN. The segment at 35–56 is disordered; that stretch reads NNNNNNNNNNNNNNNNNRNKKL. Residues 73 to 159 form the Lipoyl-binding domain; the sequence is FATIGITNYV…KTTTTTTKIK (87 aa).

This sequence belongs to the GcvH family.

This is Glycine cleavage system H-like protein gcvH4 (gcvH4) from Dictyostelium discoideum (Social amoeba).